The sequence spans 99 residues: DNA-binding protein Fis (99 aa).

The H-T-H motif DNA-binding region spans 75 to 94; it reads QTRAANMLGINRGTLRKKLK.

Belongs to the transcriptional regulatory Fis family. In terms of assembly, homodimer.

Activates ribosomal RNA transcription. Plays a direct role in upstream activation of rRNA promoters. The sequence is that of DNA-binding protein Fis from Haemophilus influenzae (strain PittEE).